Reading from the N-terminus, the 60-residue chain is Large ribosomal subunit protein uL30 (60 aa).

This sequence belongs to the universal ribosomal protein uL30 family. Part of the 50S ribosomal subunit.

This is Large ribosomal subunit protein uL30 from Streptomyces filamentosus (Streptomyces roseosporus).